We begin with the raw amino-acid sequence, 353 residues long: Aromatic amino acid aminotransferase (353 aa).

Position 217 is an N6-(pyridoxal phosphate)lysine (K217).

The protein belongs to the class-II pyridoxal-phosphate-dependent aminotransferase family. As to quaternary structure, homodimer. It depends on pyridoxal 5'-phosphate as a cofactor.

The enzyme catalyses an aromatic L-alpha-amino acid + 2-oxoglutarate = an aromatic oxo-acid + L-glutamate. Aminotransferase that catalyzes the conversion of aromatic amino acids and 2-oxoglutarate into corresponding aromatic oxo acids and L-glutamate. The polypeptide is Aromatic amino acid aminotransferase (Mycobacterium tuberculosis (strain ATCC 25177 / H37Ra)).